The sequence spans 426 residues: MSEEEKKVYLEDWRSAKEWGGFLYSIERWERIAEVEKIVCNACKEICLGLREEELLGLLAEGGMKKTLKEEFSEDKAKDARYLEYIVVDDVLLLDAHREYGGEVTKELVRQMLLGKEGKDIDKRYVDRVAGVVRERQRKREEETERSVKELVGDEEKAKSKEEKAKSKEEKAKSKRGRKGKSASAPSEQEEEKKESEVEEAEQGGEVEALPVEVGGARSKGGKKKSKGGRKCFKIHRRVLRWTKSPEKIKEEWDKGSEERWKGRSLEEIKEQKIVHDITGVLELLRSEDADRFFMDAGKYRKGGSERQRMVAIGALETGGQRMTGVVEVGTFKDGDGCPVVYHLRFKPTSIGSIGDVINPGVVEASDVGRVDEGEECEDADKFVYPKGVRFETVKETGSFQIVWKNPSDTSEVLRRLIVYCRPCVI.

The segment covering 136-172 (RQRKREEETERSVKELVGDEEKAKSKEEKAKSKEEKA) has biased composition (basic and acidic residues). Positions 136-230 (RQRKREEETE…GGKKKSKGGR (95 aa)) are disordered. Positions 220–230 (KGGKKKSKGGR) are enriched in basic residues.

It belongs to the UPF0329 family.

In Encephalitozoon cuniculi (strain GB-M1) (Microsporidian parasite), this protein is UPF0329 protein ECU06_0040.